A 994-amino-acid polypeptide reads, in one-letter code: Alanine--tRNA ligase, chloroplastic/mitochondrial (994 aa).

The interval 1–29 (MGGLKLPPQTLHGIHGGRRPLTAPSSKPS) is disordered. His-672, His-676, Cys-774, and His-778 together coordinate Zn(2+).

It belongs to the class-II aminoacyl-tRNA synthetase family. Monomer. Zn(2+) is required as a cofactor.

The protein resides in the plastid. Its subcellular location is the chloroplast. The protein localises to the mitochondrion. The enzyme catalyses tRNA(Ala) + L-alanine + ATP = L-alanyl-tRNA(Ala) + AMP + diphosphate. Catalyzes the attachment of alanine to tRNA(Ala) in a two-step reaction: alanine is first activated by ATP to form Ala-AMP and then transferred to the acceptor end of tRNA(Ala). Also edits incorrectly charged tRNA(Ala) via its editing domain. The polypeptide is Alanine--tRNA ligase, chloroplastic/mitochondrial (Populus trichocarpa (Western balsam poplar)).